The following is a 109-amino-acid chain: Small ribosomal subunit protein bS18c (109 aa).

A disordered region spans residues 82-109 (GFERSESTPRTNALKPRNKNKQNNQTQF).

This sequence belongs to the bacterial ribosomal protein bS18 family. Part of the 30S ribosomal subunit.

The protein resides in the plastid. The chain is Small ribosomal subunit protein bS18c from Cuscuta reflexa (Southern Asian dodder).